The chain runs to 437 residues: Elongation factor 1-gamma-B (437 aa).

The GST N-terminal domain maps to 2 to 87; that stretch reads AGGTLYTYPD…YVANDELRGS (86 aa). The region spanning 89–222 is the GST C-terminal domain; that stretch reads NRLHQAQVIQ…KMAQFDAKKF (134 aa). The span at 225–240 shows a compositional bias: basic and acidic residues; that stretch reads VQPKKETPKKEKPAKE. Residues 225–279 are disordered; that stretch reads VQPKKETPKKEKPAKEPKKKKKKKKKATPAPAPAPEDDLDESEKALAAEPKSKDP. The segment covering 241-251 has biased composition (basic residues); sequence PKKKKKKKKKA. Over residues 266 to 279 the composition is skewed to basic and acidic residues; that stretch reads SEKALAAEPKSKDP. An EF-1-gamma C-terminal domain is found at 276-437; it reads SKDPYAHLPK…KAFNQGKIFK (162 aa).

EF-1 is composed of four subunits: alpha, beta, delta, and gamma.

Functionally, probably plays a role in anchoring the complex to other cellular components. This Xenopus laevis (African clawed frog) protein is Elongation factor 1-gamma-B (eef1g-b).